The chain runs to 135 residues: uncharacterized protein (135 aa).

In terms of domain architecture, HotDog ACOT-type spans proline 8–phenylalanine 123.

This sequence belongs to the acyl coenzyme A hydrolase family.

This is an uncharacterized protein from Buchnera aphidicola subsp. Baizongia pistaciae (strain Bp).